The sequence spans 247 residues: MAEEEQRKKIPLVPENLLKKRKAYQALKATQAKQALLQKKEQRKGKELKFKRLEWFLHDSWRQLRDRVRLRRLEVKPHGLEVPDKHSLAFVVRIERISGVSSVVQRTIARLRLKKIFSGVFMQVTPQTIKTLRIVEPYVTWGFPNLKSVRELILKRGQAKVKNKIIPLTDNTVIEEHLGKFGVICLEDLIHEIAFPGKNFQAISGFLRPFQLSVARHATKNRVGFLKEVGSPGYRGERINQLIRQLN.

Belongs to the universal ribosomal protein uL30 family.

This Sus scrofa (Pig) protein is Large ribosomal subunit protein uL30 (RPL7L1).